Consider the following 451-residue polypeptide: Cytosolic Fe-S cluster assembly factor NAR1 (451 aa).

8 residues coordinate [4Fe-4S] cluster: Cys20, Cys56, Cys59, Cys62, Cys166, Cys213, Cys382, and Cys386.

It belongs to the NARF family.

Functionally, component of the cytosolic Fe/S protein assembly machinery. Required for maturation of extramitochondrial Fe/S proteins. May play a role in the transfer of pre-assembled Fe/S clusters to target apoproteins. This chain is Cytosolic Fe-S cluster assembly factor NAR1 (NAR1), found in Eremothecium gossypii (strain ATCC 10895 / CBS 109.51 / FGSC 9923 / NRRL Y-1056) (Yeast).